Here is a 455-residue protein sequence, read N- to C-terminus: Killer cell immunoglobulin-like receptor 3DL2 (455 aa).

The signal sequence occupies residues 1–21; the sequence is MSLTVVSMACVGFFLLQGAWP. Topologically, residues 22-340 are extracellular; that stretch reads LMGGQDKPFL…SKSGICRHLH (319 aa). Ig-like C2-type domains lie at 42 to 102, 137 to 202, and 237 to 300; these read GGHV…RPHS, GETV…VPHS, and GENV…FRAL. Cystine bridges form between cysteine 49/cysteine 95 and cysteine 144/cysteine 195. N-linked (GlcNAc...) asparagine glycosylation is found at asparagine 179, asparagine 239, asparagine 273, and asparagine 306. Cysteine 244 and cysteine 293 form a disulfide bridge. A helical membrane pass occupies residues 341-360; sequence VLIGTSVVIFLFILLLFFLL. The Cytoplasmic portion of the chain corresponds to 361-455; it reads YRWCSNKKNA…APQSGLEGVF (95 aa).

This sequence belongs to the immunoglobulin superfamily. As to quaternary structure, interacts with peptide-free HLA-F open conformer. Expressed in astrocytes.

It is found in the cell membrane. Receptor on natural killer (NK) cells and T cells for MHC class I molecules. Upon binding of peptide-free HLA-F open conformer, negatively regulates NK and T cell effector functions. Acts as a receptor on astrocytes for HLA-F. Through interaction with HLA-F, may protect motor neurons from astrocyte-induced toxicity. This is Killer cell immunoglobulin-like receptor 3DL2 from Homo sapiens (Human).